Here is a 1171-residue protein sequence, read N- to C-terminus: ATP-dependent helicase/deoxyribonuclease subunit B (1171 aa).

The UvrD-like helicase ATP-binding domain maps to 1–343 (MSLRFVIGRA…LVADENYRYR (343 aa)). Position 8–15 (8–15 (GRAGSGKS)) interacts with ATP. Positions 281-587 (MEQPRFHSPA…QFANIPPSLD (307 aa)) constitute a UvrD-like helicase C-terminal domain. [4Fe-4S] cluster is bound by residues Cys-805, Cys-1129, Cys-1132, and Cys-1138.

The protein belongs to the helicase family. AddB/RexB type 1 subfamily. As to quaternary structure, heterodimer of AddA and AddB. Mg(2+) serves as cofactor. [4Fe-4S] cluster is required as a cofactor.

Functionally, the heterodimer acts as both an ATP-dependent DNA helicase and an ATP-dependent, dual-direction single-stranded exonuclease. Recognizes the chi site generating a DNA molecule suitable for the initiation of homologous recombination. The AddB subunit has 5' -&gt; 3' nuclease activity but not helicase activity. This Bacillus cereus (strain AH187) protein is ATP-dependent helicase/deoxyribonuclease subunit B.